The sequence spans 88 residues: UPF0298 protein BcerKBAB4_3759 (88 aa).

It belongs to the UPF0298 family.

It localises to the cytoplasm. The protein is UPF0298 protein BcerKBAB4_3759 of Bacillus mycoides (strain KBAB4) (Bacillus weihenstephanensis).